The following is a 1162-amino-acid chain: Eukaryotic translation initiation factor 2-alpha kinase (1162 aa).

The N-terminal stretch at 1–39 (MQDDLDGIVRHRRRSLSFLQIVTLTMAGLVAFDPAQVLA) is a signal peptide. The Lumenal segment spans residues 40–537 (GHPTTDSELQ…DDIDAPVKVV (498 aa)). Residues asparagine 193, asparagine 260, asparagine 353, asparagine 461, asparagine 505, and asparagine 516 are each glycosylated (N-linked (GlcNAc...) asparagine). Residues 498–517 (TAPTSPTNATSEGTEATGNH) form a disordered region. Positions 499-517 (APTSPTNATSEGTEATGNH) are enriched in polar residues. The helical transmembrane segment at 538 to 558 (ILSLWFWWKEIVVIAFTSAVI) threads the bilayer. At 559–1162 (LNIFMGQRNQ…TFSSSSEPHQ (604 aa)) the chain is on the cytoplasmic side. Position 624 is a phosphoserine (serine 624). Positions 642 to 1130 (FELMQCLGRG…LRNILQLPHL (489 aa)) constitute a Protein kinase domain. Residues 648-656 (LGRGGFGVV) and lysine 671 each bind ATP. Serine 797 is modified (phosphoserine). A disordered region spans residues 801–839 (FRSESQSAALRAEEEDDTDDDYEEDEEQQGDHEKRHRSS). Residues 813 to 828 (EEEDDTDDDYEEDEEQ) are compositionally biased toward acidic residues. Phosphothreonine is present on threonine 818. Catalysis depends on aspartate 980, which acts as the Proton acceptor. Threonine 1028 carries the post-translational modification Phosphothreonine. The interval 1135-1162 (QSEQAELAERARRLSRSRTFSSSSEPHQ) is disordered. Positions 1151–1162 (SRTFSSSSEPHQ) are enriched in low complexity.

The protein belongs to the protein kinase superfamily. Ser/Thr protein kinase family. GCN2 subfamily. Forms dimers with HSPA5/BIP in resting cells. Oligomerizes in ER-stressed cells. Post-translationally, autophosphorylated. N-glycosylated.

Its subcellular location is the endoplasmic reticulum membrane. The enzyme catalyses L-seryl-[protein] + ATP = O-phospho-L-seryl-[protein] + ADP + H(+). It carries out the reaction L-threonyl-[protein] + ATP = O-phospho-L-threonyl-[protein] + ADP + H(+). With respect to regulation, perturbation in protein folding in the endoplasmic reticulum (ER) promotes reversible dissociation from HSPA5/BIP and oligomerization, resulting in transautophosphorylation and kinase activity induction. Its function is as follows. Phosphorylates the alpha subunit of eukaryotic translation-initiation factor 2 (EIF2), leading to its inactivation and thus to a rapid reduction of translational initiation and repression of global protein synthesis. The polypeptide is Eukaryotic translation initiation factor 2-alpha kinase (PEK) (Drosophila melanogaster (Fruit fly)).